Consider the following 119-residue polypeptide: Large ribosomal subunit protein bL12 (119 aa).

Belongs to the bacterial ribosomal protein bL12 family. As to quaternary structure, homodimer. Part of the ribosomal stalk of the 50S ribosomal subunit. Forms a multimeric L10(L12)X complex, where L10 forms an elongated spine to which 2 to 4 L12 dimers bind in a sequential fashion. Binds GTP-bound translation factors.

Forms part of the ribosomal stalk which helps the ribosome interact with GTP-bound translation factors. Is thus essential for accurate translation. The chain is Large ribosomal subunit protein bL12 from Bacillus anthracis (strain A0248).